Consider the following 193-residue polypeptide: ATP-dependent Clp protease proteolytic subunit 1 (193 aa).

Residue Ser-99 is the Nucleophile of the active site. His-124 is a catalytic residue.

It belongs to the peptidase S14 family. Fourteen ClpP subunits assemble into 2 heptameric rings which stack back to back to give a disk-like structure with a central cavity, resembling the structure of eukaryotic proteasomes.

Its subcellular location is the cytoplasm. It carries out the reaction Hydrolysis of proteins to small peptides in the presence of ATP and magnesium. alpha-casein is the usual test substrate. In the absence of ATP, only oligopeptides shorter than five residues are hydrolyzed (such as succinyl-Leu-Tyr-|-NHMec, and Leu-Tyr-Leu-|-Tyr-Trp, in which cleavage of the -Tyr-|-Leu- and -Tyr-|-Trp bonds also occurs).. Functionally, cleaves peptides in various proteins in a process that requires ATP hydrolysis. Has a chymotrypsin-like activity. Plays a major role in the degradation of misfolded proteins. In Shouchella clausii (strain KSM-K16) (Alkalihalobacillus clausii), this protein is ATP-dependent Clp protease proteolytic subunit 1.